Here is a 109-residue protein sequence, read N- to C-terminus: C-X-C motif chemokine 13 (109 aa).

Residues 1-21 form the signal peptide; the sequence is MRLSTATLLLLLASCLSPGHG. Intrachain disulfides connect cysteine 32–cysteine 59 and cysteine 34–cysteine 75.

The protein belongs to the intercrine alpha (chemokine CxC) family. In terms of tissue distribution, found in spleen (B-cell-rich zone or follicles), Peyer patches (strongest within germinal centers and extending to the mantle zone) and lymph nodes (in reticular pattern in follicles).

It localises to the secreted. Strongly chemotactic for B-lymphocytes, weakly for spleen monocytes and macrophages but no chemotactic activity for granulocytes. Binds to BLR1/CXCR5. May play a role in directing the migration of B-lymphocytes to follicles in secondary lymphoid organs. The chain is C-X-C motif chemokine 13 (Cxcl13) from Mus musculus (Mouse).